The primary structure comprises 117 residues: Large ribosomal subunit protein uL18 (117 aa).

This sequence belongs to the universal ribosomal protein uL18 family. Part of the 50S ribosomal subunit; part of the 5S rRNA/L5/L18/L25 subcomplex. Contacts the 5S and 23S rRNAs.

Functionally, this is one of the proteins that bind and probably mediate the attachment of the 5S RNA into the large ribosomal subunit, where it forms part of the central protuberance. This chain is Large ribosomal subunit protein uL18, found in Laribacter hongkongensis (strain HLHK9).